The sequence spans 278 residues: uncharacterized protein (278 aa).

At 1 to 34 (MAKTIKVIRKKDPKKKNLSDPLAKQKLVWKIGHV) the chain is on the cytoplasmic side. A helical transmembrane segment spans residues 35–55 (LTLVFGLLFSITYFYHVLIFF). The Extracellular segment spans residues 56–129 (KYRSWKWLFL…DLLSSENFHT (74 aa)). Residues 130 to 150 (LLIACLWFFGGGKSFYKILPY) form a helical membrane-spanning segment. Topologically, residues 151-180 (MILSYLHLTKMNYELNANKEEKIPLTPKDR) are cytoplasmic. A helical transmembrane segment spans residues 181–201 (KMLHLLAYSELLVILALTLDT). The Extracellular segment spans residues 202-205 (ILFK). The chain crosses the membrane as a helical span at residues 206 to 222 (TGTSGFMLVIYVGIYWL). Residues 223-278 (RLNFSPYAQVAVLELLVKFEKYVPKKYRDKWQVIKNFIYMKMKEHEKRTEEVARYA) lie on the Cytoplasmic side of the membrane.

Its subcellular location is the cell membrane. This is an uncharacterized protein from Saccharomyces cerevisiae (strain ATCC 204508 / S288c) (Baker's yeast).